A 468-amino-acid chain; its full sequence is MPPWGAALALILAVLALLGLLGPRLRGPWGRAVGERTLPGAQDRDDGEEADGGGPADQFSDGREPLPGGCSLVCKPSALAQCLLRALRRSEALEAGPRSWFSGPHLQTLCHFVLPVAPGPELAREYLQLADDGLVALDWVVGPCVRGRRITSAGGLPAVLLVIPNAWGRLTRNVLGLCLLALERGYYPVIFHRRGHHGCPLVSPRLQPFGDPSDLKEAVTYIRFRHPAAPLFAVSEGSGSALLLSYLGECGSSSYVTGAACISPVLRCREWFEAGLPWPYERGFLLHQKIALSRYATALEDTVDTSRLFRSRSLREFEEALFCHTKSFPISWDTYWDRNDPLRDVDEAAVPVLCICSADDPVCGPPDHTLTTELFHSNPYFFLLLSRHGGHCGFLRQEPLPAWSHEVILESFRALTEFFRTEERIKGLSRHRASFLGGRRRGGALQRREVSSSSNLEEIFNWKRSYTR.

The first 23 residues, 1-23 (MPPWGAALALILAVLALLGLLGP), serve as a signal peptide directing secretion. The segment at 33-61 (VGERTLPGAQDRDDGEEADGGGPADQFSD) is disordered. Catalysis depends on charge relay system residues Asp-360 and His-391. A Phosphoserine modification is found at Ser-434.

This sequence belongs to the AB hydrolase superfamily. AB hydrolase 4 family. Interacts with PDE3B; this interaction regulates PDE3B's stability and expression and, thereby, impacts the antilipolytic action of insulin.

Its subcellular location is the secreted. In terms of biological role, may regulate adipocyte lipolysis and liver lipid accumulation. The polypeptide is Protein ABHD15 (Homo sapiens (Human)).